Consider the following 296-residue polypeptide: tRNA dimethylallyltransferase (296 aa).

8–15 (GPTGSGKT) lines the ATP pocket. Position 10 to 15 (10 to 15 (TGSGKT)) interacts with substrate. The interval 32 to 35 (DSRQ) is interaction with substrate tRNA.

The protein belongs to the IPP transferase family. As to quaternary structure, monomer. Requires Mg(2+) as cofactor.

It catalyses the reaction adenosine(37) in tRNA + dimethylallyl diphosphate = N(6)-dimethylallyladenosine(37) in tRNA + diphosphate. Functionally, catalyzes the transfer of a dimethylallyl group onto the adenine at position 37 in tRNAs that read codons beginning with uridine, leading to the formation of N6-(dimethylallyl)adenosine (i(6)A). This is tRNA dimethylallyltransferase from Leptospira biflexa serovar Patoc (strain Patoc 1 / Ames).